The following is a 179-amino-acid chain: Large ribosomal subunit protein uL6 (179 aa).

This sequence belongs to the universal ribosomal protein uL6 family. Part of the 50S ribosomal subunit.

Its function is as follows. This protein binds to the 23S rRNA, and is important in its secondary structure. It is located near the subunit interface in the base of the L7/L12 stalk, and near the tRNA binding site of the peptidyltransferase center. This Nocardioides sp. (strain ATCC BAA-499 / JS614) protein is Large ribosomal subunit protein uL6.